The sequence spans 294 residues: Elongation factor Ts (294 aa).

Positions 80 to 83 are involved in Mg(2+) ion dislocation from EF-Tu; it reads TDFV.

It belongs to the EF-Ts family.

It localises to the cytoplasm. Associates with the EF-Tu.GDP complex and induces the exchange of GDP to GTP. It remains bound to the aminoacyl-tRNA.EF-Tu.GTP complex up to the GTP hydrolysis stage on the ribosome. This chain is Elongation factor Ts, found in Polynucleobacter necessarius subsp. necessarius (strain STIR1).